Here is a 401-residue protein sequence, read N- to C-terminus: Phosphoglycerate kinase, cytosolic (401 aa).

Valine 24, aspartate 25, asparagine 27, arginine 41, serine 63, histidine 64, glycine 66, arginine 67, arginine 122, histidine 154, and arginine 155 together coordinate (2R)-3-phosphoglycerate. Glycine 200 is a binding site for ADP. Glycine 200 serves as a coordination point for CDP. AMP-binding residues include lysine 202 and lysine 206. Lysine 206 is a binding site for ATP. Glycine 224 provides a ligand contact to ADP. Glycine 224 serves as a coordination point for CDP. Residues glycine 225 and glycine 297 each coordinate AMP. Positions 225 and 297 each coordinate ATP. CDP contacts are provided by glycine 322 and phenylalanine 327. Phenylalanine 327 contributes to the ADP binding site. Glutamate 328 lines the AMP pocket. Residues glutamate 328, aspartate 359, and serine 360 each contribute to the ATP site. Residue aspartate 359 coordinates Mg(2+).

The protein belongs to the phosphoglycerate kinase family. Monomer. Mg(2+) is required as a cofactor.

The protein localises to the cytoplasm. It carries out the reaction (2R)-3-phosphoglycerate + ATP = (2R)-3-phospho-glyceroyl phosphate + ADP. The protein operates within carbohydrate degradation; glycolysis; pyruvate from D-glyceraldehyde 3-phosphate: step 2/5. This chain is Phosphoglycerate kinase, cytosolic, found in Nicotiana tabacum (Common tobacco).